A 1106-amino-acid polypeptide reads, in one-letter code: Probable NAD-specific glutamate dehydrogenase (1106 aa).

Lys654 is an active-site residue.

Belongs to the Glu/Leu/Phe/Val dehydrogenases family. In terms of assembly, homotetramer.

The protein localises to the cytoplasm. The enzyme catalyses L-glutamate + NAD(+) + H2O = 2-oxoglutarate + NH4(+) + NADH + H(+). In terms of biological role, NAD(+)-dependent glutamate dehydrogenase which degrades glutamate to ammonia and alpha-ketoglutarate. This chain is Probable NAD-specific glutamate dehydrogenase (gdh2), found in Schizosaccharomyces pombe (strain 972 / ATCC 24843) (Fission yeast).